Reading from the N-terminus, the 221-residue chain is Transcription factor MYB1 (221 aa).

2 consecutive HTH myb-type domains span residues 1-57 (MESV…LNYL) and 58-112 (RPNI…QKKL). DNA-binding regions (H-T-H motif) lie at residues 33-57 (WHQVPLRSGLNRCRKSCRMRWLNYL) and 85-108 (WSLIAGRLPGRTSNDVKNYWNTHL). The segment at 126–154 (KTIVPKGTEAQPRAHPKSPPRPSPPSNNE) is disordered.

Expressed in stems and leaves. Expressed at low levels in ovaries.

The protein resides in the nucleus. In terms of biological role, transcription activator involved in the regulation of anthocyanin biosynthesis in red-fleshed kiwifruit varieties. Activates the transcription of genes involved in anthocyanin biosynthesis, such as dihydroflavonol reductase (DFR), anthocyanidin synthase (ANS) and UDP flavonoid glycosyltransferase (UFGT). The chain is Transcription factor MYB1 from Actinidia chinensis var. chinensis (Chinese soft-hair kiwi).